A 236-amino-acid polypeptide reads, in one-letter code: Ribonuclease PH (236 aa).

Phosphate-binding positions include R86 and 124–126; that span reads GTR.

The protein belongs to the RNase PH family. In terms of assembly, homohexameric ring arranged as a trimer of dimers.

The enzyme catalyses tRNA(n+1) + phosphate = tRNA(n) + a ribonucleoside 5'-diphosphate. Phosphorolytic 3'-5' exoribonuclease that plays an important role in tRNA 3'-end maturation. Removes nucleotide residues following the 3'-CCA terminus of tRNAs; can also add nucleotides to the ends of RNA molecules by using nucleoside diphosphates as substrates, but this may not be physiologically important. Probably plays a role in initiation of 16S rRNA degradation (leading to ribosome degradation) during starvation. The chain is Ribonuclease PH from Thermodesulfovibrio yellowstonii (strain ATCC 51303 / DSM 11347 / YP87).